A 251-amino-acid chain; its full sequence is Membrane-anchored junction protein (251 aa).

Residues 1–227 (MSLKPFTYPF…HSNPPPLKEP (227 aa)) are Nuclear-facing. The segment at 140–225 (RKRKLMEEPS…LEHSNPPPLK (86 aa)) is disordered. The span at 183 to 198 (EDSQQDTPASDSTAVT) shows a compositional bias: polar residues. The helical transmembrane segment at 228-246 (AARGFLGFLSALFPFRYFF) threads the bilayer. Over 247–251 (RKSTQ) the chain is Perinuclear space.

Belongs to the MAJIN family. As to quaternary structure, component of the MAJIN-TERB1-TERB2 complex, composed of MAJIN, TERB1 and TERB2.

The protein resides in the nucleus inner membrane. It localises to the chromosome. It is found in the telomere. Its function is as follows. Meiosis-specific telomere-associated protein involved in meiotic telomere attachment to the nucleus inner membrane, a crucial step for homologous pairing and synapsis. Component of the MAJIN-TERB1-TERB2 complex, which promotes telomere cap exchange by mediating attachment of telomeric DNA to the inner nuclear membrane and replacement of the protective cap of telomeric chromosomes: in early meiosis, the MAJIN-TERB1-TERB2 complex associates with telomeric DNA and the shelterin/telosome complex. During prophase, the complex matures and promotes release of the shelterin/telosome complex from telomeric DNA. In the complex, MAJIN acts as the anchoring subunit to the nucleus inner membrane. MAJIN shows DNA-binding activity, possibly for the stabilization of telomere attachment on the nucleus inner membrane. The chain is Membrane-anchored junction protein from Rattus norvegicus (Rat).